Consider the following 419-residue polypeptide: UDP-N-acetylglucosamine 1-carboxyvinyltransferase (419 aa).

22–23 (KN) is a binding site for phosphoenolpyruvate. Arginine 91 is a binding site for UDP-N-acetyl-alpha-D-glucosamine. The Proton donor role is filled by cysteine 115. Cysteine 115 carries the post-translational modification 2-(S-cysteinyl)pyruvic acid O-phosphothioketal. Residues 120–124 (RPVDL), 160–163 (KVSV), aspartate 305, and isoleucine 327 contribute to the UDP-N-acetyl-alpha-D-glucosamine site.

Belongs to the EPSP synthase family. MurA subfamily.

Its subcellular location is the cytoplasm. It carries out the reaction phosphoenolpyruvate + UDP-N-acetyl-alpha-D-glucosamine = UDP-N-acetyl-3-O-(1-carboxyvinyl)-alpha-D-glucosamine + phosphate. It functions in the pathway cell wall biogenesis; peptidoglycan biosynthesis. Its function is as follows. Cell wall formation. Adds enolpyruvyl to UDP-N-acetylglucosamine. The sequence is that of UDP-N-acetylglucosamine 1-carboxyvinyltransferase from Serratia proteamaculans (strain 568).